Reading from the N-terminus, the 292-residue chain is 4-hydroxy-tetrahydrodipicolinate synthase (292 aa).

Thr-45 lines the pyruvate pocket. Residue Tyr-133 is the Proton donor/acceptor of the active site. The Schiff-base intermediate with substrate role is filled by Lys-161. Ile-203 contacts pyruvate.

Belongs to the DapA family. As to quaternary structure, homotetramer; dimer of dimers.

It localises to the cytoplasm. It carries out the reaction L-aspartate 4-semialdehyde + pyruvate = (2S,4S)-4-hydroxy-2,3,4,5-tetrahydrodipicolinate + H2O + H(+). The protein operates within amino-acid biosynthesis; L-lysine biosynthesis via DAP pathway; (S)-tetrahydrodipicolinate from L-aspartate: step 3/4. Functionally, catalyzes the condensation of (S)-aspartate-beta-semialdehyde [(S)-ASA] and pyruvate to 4-hydroxy-tetrahydrodipicolinate (HTPA). The chain is 4-hydroxy-tetrahydrodipicolinate synthase from Vibrio cholerae serotype O1 (strain M66-2).